Here is a 636-residue protein sequence, read N- to C-terminus: Chaperone protein DnaK2 (636 aa).

Threonine 198 carries the phosphothreonine; by autocatalysis modification. Residues 604-618 show a composition bias toward low complexity; it reads EAGVGAPGAGPEAGT. The interval 604–636 is disordered; that stretch reads EAGVGAPGAGPEAGTSSGGGDDVIDAEFSEPEK. Acidic residues predominate over residues 625 to 636; it reads DVIDAEFSEPEK.

Belongs to the heat shock protein 70 family.

Functionally, acts as a chaperone. The polypeptide is Chaperone protein DnaK2 (dnaK2) (Synechocystis sp. (strain ATCC 27184 / PCC 6803 / Kazusa)).